Consider the following 320-residue polypeptide: ATP-dependent 6-phosphofructokinase (320 aa).

An ATP-binding site is contributed by Gly-12. 22–26 (RGVVR) is an ADP binding site. ATP is bound by residues 73–74 (RF) and 103–106 (GDGS). Residue Asp-104 coordinates Mg(2+). Residue 126-128 (TID) participates in substrate binding. Asp-128 functions as the Proton acceptor in the catalytic mechanism. An ADP-binding site is contributed by Arg-155. Residues Arg-163 and 170–172 (MGR) contribute to the substrate site. ADP contacts are provided by residues 186–188 (GCE), Lys-212, and 214–216 (KKH). Residues Glu-223, Arg-244, and 250–253 (HIQR) each bind substrate.

The protein belongs to the phosphofructokinase type A (PFKA) family. ATP-dependent PFK group I subfamily. Prokaryotic clade 'B1' sub-subfamily. In terms of assembly, homotetramer. The cofactor is Mg(2+).

It localises to the cytoplasm. It catalyses the reaction beta-D-fructose 6-phosphate + ATP = beta-D-fructose 1,6-bisphosphate + ADP + H(+). It participates in carbohydrate degradation; glycolysis; D-glyceraldehyde 3-phosphate and glycerone phosphate from D-glucose: step 3/4. Its activity is regulated as follows. Allosterically activated by ADP and other diphosphonucleosides, and allosterically inhibited by phosphoenolpyruvate. Its function is as follows. Catalyzes the phosphorylation of D-fructose 6-phosphate to fructose 1,6-bisphosphate by ATP, the first committing step of glycolysis. The chain is ATP-dependent 6-phosphofructokinase from Blochmanniella floridana.